A 154-amino-acid chain; its full sequence is MAL-like protein (154 aa).

The next 4 membrane-spanning stretches (helical) occupy residues 24-44 (LFLT…FWVW), 61-81 (VLYV…SYLF), 99-119 (GTTG…TIIS), and 131-151 (VAAS…AFSI). One can recognise an MARVEL domain in the interval 24-154 (LFLTIPFAFF…ILHAFSIYYH (131 aa)).

The protein belongs to the MAL family.

It is found in the membrane. This Mus musculus (Mouse) protein is MAL-like protein (Mall).